Here is a 1242-residue protein sequence, read N- to C-terminus: MHWQEGGGRGCVYTHGNCRRNLTARALQALQHVEALTCHYCVSLLHLLPLLLMWMPPVCADDSAVTVNVLSMMYNPEYYVEKVNAINAGFDASLSAHGWKTGSGATISVIRPPSYNTTAEDIFQLGVKQSEGKLLVVFGPLGTDPVVWVRDKLKENDLVAIAPIAYSSEVRGWNPHLYSISVEPNAELLALIRYAVVYLGLPRVGLMYAKGNGFDKESYEFTMRIMEIMGRKPCGVFAVESSGGRDVLEGQLNTKWGQFVATRPQAVLLFSSLEEETTGWFVKKIAQDNRTVDMYLLAPSSFQHFLIKTWSDALVSLNRTFTPGQLITTGTVPLASDNRSSMVRHFQRDMDNYLDTNSDWKGFAKPEHYLKDDKLGEMMVFGWLAGEVLFEALNNAPQLTNRTSFMESLYKQRRYVIDDFVVGDFGGECDEALHYRVPCVIAIKAAAWTHMRVVDDSLSLKPMKKGSVTWSVSECSSANVQVSAPLIGLYVVLTDDKVAQRASMRWSLGARSIEEADDVDKRIFFHSLKVNLKNLTQSLEQVRDTKAVAAVLGVTADILSVPNMTFIGPIPLFPRLNKFWRNVIHLQPLLAHELYVLAVYLSNTSSTGVKALVRGGEASEVVDTLDKSLVTFGVSLDSSKTLGDGDPMSSYLSGNGDVFCIGLTPPDVAAVARHLQTHLRARVFVPFNDILLFYQEFVAGFNASKESIASSEGLLFATSFPHWGKKNRKSDMVARFHRHVNESHWDPLTFLGFATTRLLQVVISNMRKVNAEPLADRIYTESNIRVDDVGFGPFSDAECVSGTSVSANECASNFGATNISVWSMGACAEFKLAQDTGWDDTVYGLCYSARGSTHTVTDSWNNFWVCIRLVIIYCPWCVPTHLPAERRNNNRAPKEPTDPVTLIFTDIESSTALWAAHPDLMPDAVAAHHRMVRSLIGRYKCYEVKTVGDSFMIASKSPFAAVQLAQELQLCFLHHDWGTNALDDSYREFEEQRAEGECEYTPPTAHMDPEVYSRLWNGLRVRVGIHTGLCDIIRHDEVTKGYDYYGRTPNMAARTESVANGGQVLMTHAAYMSLSAEDRKQIDVTALGDVALRGVSDPVKMYQLNTVPSRNFAALRLDREYFFDEGEDGTTTSTSDHSSSRADVSESGQIIATALQSLLSTFKTAHREKLLLPYCERWRVPLPRKAASEWDDAYCEEVVRRIAVKVGRVADHGADSGSESSSTQGSSSIIIVPFYDMHLQEY.

Residues Met1–His39 lie on the Cytoplasmic side of the membrane. The helical transmembrane segment at Tyr40–Ala60 threads the bilayer. At Asp61–Asn862 the chain is on the extracellular side. N-linked (GlcNAc...) asparagine glycans are attached at residues Asn116, Asn289, Asn318, Asn338, Asn401, Asn534, Asn563, Asn603, Asn702, Asn741, and Asn818. A helical transmembrane segment spans residues Phe863 to Pro883. The Cytoplasmic portion of the chain corresponds to Ala884–Tyr1242. The 156-residue stretch at Thr901–Glu1056 folds into the Guanylate cyclase domain. 2 residues coordinate Mg(2+): Asp906 and Asp949.

This sequence belongs to the adenylyl cyclase class-3 family. Mg(2+) serves as cofactor.

Its subcellular location is the membrane. The catalysed reaction is ATP = 3',5'-cyclic AMP + diphosphate. In terms of biological role, could act as a receptor for an unknown ligand. The protein is Receptor-type adenylate cyclase GRESAG 4.1 (GRESAG 4.1) of Trypanosoma brucei brucei.